A 368-amino-acid chain; its full sequence is E3 ubiquitin-protein ligase E3D (368 aa).

At alanine 2 the chain carries N-acetylalanine. The BRAT1-like motif signature appears at 129–159 (PLPSENWSALVGEWCCHPDPFANRPLHPREN). Cysteine 144 contributes to the Zn(2+) binding site. The interval 214-236 (RPSEGSFPNIPRSQFLQSIIAQC) is interaction with UBE2C. The tract at residues 332–368 (LPSATCLELLLILSRNNASLPLSLRQMNSFQVAFLKM) is HECT-like.

Interacts with UBE2C/UbcH10 (E2 ubiquitin-conjugating enzyme). In vitro, interacts with cyclin-B. In terms of processing, ubiquitinated by UBCH10 (E2 ubiquitin-conjugating enzyme).

It is found in the cytoplasm. It catalyses the reaction S-ubiquitinyl-[E2 ubiquitin-conjugating enzyme]-L-cysteine + [acceptor protein]-L-lysine = [E2 ubiquitin-conjugating enzyme]-L-cysteine + N(6)-ubiquitinyl-[acceptor protein]-L-lysine.. It participates in protein modification; protein ubiquitination. E3 ubiquitin-protein ligase which accepts ubiquitin from specific E2 ubiquitin-conjugating enzymes, and transfers it to substrates, generally promoting their degradation by the proteasome. Independently of its E3 ubiquitin-protein ligase activity, acts as an inhibitor of CPSF3 endonuclease activity by blocking CPSF3 active site. This chain is E3 ubiquitin-protein ligase E3D (Ube3d), found in Mus musculus (Mouse).